Reading from the N-terminus, the 131-residue chain is Small ribosomal subunit protein bS6 (131 aa).

The disordered stretch occupies residues 98-131 (EASPMARARDERDSRRGPAGERSYDEAHAEEIGE). Residues 104 to 131 (RARDERDSRRGPAGERSYDEAHAEEIGE) are compositionally biased toward basic and acidic residues.

The protein belongs to the bacterial ribosomal protein bS6 family.

Its function is as follows. Binds together with bS18 to 16S ribosomal RNA. This is Small ribosomal subunit protein bS6 from Shewanella putrefaciens (strain CN-32 / ATCC BAA-453).